Consider the following 448-residue polypeptide: Adenylosuccinate synthetase (448 aa).

GTP-binding positions include 22 to 28 and 50 to 52; these read GDEGKGK and GHT. The active-site Proton acceptor is the Asp23. Mg(2+)-binding residues include Asp23 and Gly50. IMP-binding positions include 23-26, 48-51, Thr139, Arg153, Gln234, Thr249, and Arg321; these read DEGK and NAGH. Residue His51 is the Proton donor of the active site. 317–323 contributes to the substrate binding site; the sequence is SVTGRPR. GTP is bound by residues Arg323, 349–351, and 431–433; these read KLD and STG.

This sequence belongs to the adenylosuccinate synthetase family. Homodimer. Mg(2+) is required as a cofactor.

The protein localises to the cytoplasm. The catalysed reaction is IMP + L-aspartate + GTP = N(6)-(1,2-dicarboxyethyl)-AMP + GDP + phosphate + 2 H(+). Its pathway is purine metabolism; AMP biosynthesis via de novo pathway; AMP from IMP: step 1/2. Plays an important role in the de novo pathway of purine nucleotide biosynthesis. Catalyzes the first committed step in the biosynthesis of AMP from IMP. The sequence is that of Adenylosuccinate synthetase from Paraburkholderia xenovorans (strain LB400).